A 361-amino-acid chain; its full sequence is Peptide chain release factor 1 (361 aa).

Q235 bears the N5-methylglutamine mark. Positions 283–306 are disordered; it reads RSQQATAEAMTRKLQVGSGDRSQR.

The protein belongs to the prokaryotic/mitochondrial release factor family. In terms of processing, methylated by PrmC. Methylation increases the termination efficiency of RF1.

It is found in the cytoplasm. In terms of biological role, peptide chain release factor 1 directs the termination of translation in response to the peptide chain termination codons UAG and UAA. This chain is Peptide chain release factor 1, found in Xylella fastidiosa (strain M23).